The sequence spans 694 residues: Nuclear cap-binding protein subunit 3 (694 aa).

Residues 1-47 are disordered; it reads MAAVRSLRVSVKSDSASDRSESDSESDSDRDAREAEPMEVEEGEVEL. The span at 15-36 shows a compositional bias: basic and acidic residues; sequence SASDRSESDSESDSDRDAREAE. Positions 37-47 are enriched in acidic residues; the sequence is PMEVEEGEVEL. Residues 126–187 are RNA recognition motif (RRM) domain; it reads EALHMSGVDD…LSRMPDKEEV (62 aa). A WLDD motif; essential for 7-methylguanosine-containing mRNA cap binding motif is present at residues 155–158; sequence WIDD. Disordered stretches follow at residues 183 to 277, 336 to 430, and 461 to 694; these read DKEE…VKPF, ILKT…MDYD, and LRNS…DSDS. Residues 189–203 are compositionally biased toward polar residues; that stretch reads NTDSSKPSELPVQTQ. Residues 212–235 show a composition bias toward acidic residues; sequence DDDDDDDEEEEGEVDDDDDDDEED. Basic and acidic residues predominate over residues 236–264; sequence EKARDIEDETEKKPQETRETSLSQAERDS. Residues 368–386 are compositionally biased toward acidic residues; that stretch reads EPIEEEEEEEEDGEEDMDA. A compositionally biased stretch (basic and acidic residues) spans 387-404; it reads DDRVVEYKDRGEKERGPR. Residues 477–496 show a composition bias toward gly residues; that stretch reads IGGGGGGGSGGAVEGRGEGG. Basic and acidic residues-rich tracts occupy residues 501 to 517, 563 to 595, and 605 to 618; these read TSEK…EKRQ, SRRE…DKKT, and SHKD…DKPS. A compositionally biased stretch (acidic residues) spans 634–646; the sequence is DSDGVEDEDEEDD. The span at 685 to 694 shows a compositional bias: low complexity; sequence DGSNGSDSDS.

Belongs to the NCBP3 family. Component of an alternative cap-binding complex (CBC) composed of NCBP1/CBP80 and NCBP3.

It localises to the nucleus. It is found in the cytoplasm. In terms of biological role, associates with NCBP1/CBP80 to form an alternative cap-binding complex (CBC) which plays a key role in mRNA export. NCBP3 serves as adapter protein linking the capped RNAs (m7GpppG-capped RNA) to NCBP1/CBP80. Unlike the conventional CBC with NCBP2 which binds both small nuclear RNA (snRNA) and messenger (mRNA) and is involved in their export from the nucleus, the alternative CBC with NCBP3 does not bind snRNA and associates only with mRNA thereby playing a role in only mRNA export. The polypeptide is Nuclear cap-binding protein subunit 3 (Danio rerio (Zebrafish)).